The following is a 472-amino-acid chain: Carboxypeptidase E (472 aa).

The first 21 residues, 1 to 21 (MLHAMRPVLLVAALLAVTAHA), serve as a signal peptide directing secretion. A Peptidase M14 domain is found at 39–359 (HYHNQAQLEA…KSIFEYVWKS (321 aa)). The Zn(2+) site is built by His101 and Glu104. Residue Asn134 is glycosylated (N-linked (GlcNAc...) asparagine). A Zn(2+)-binding site is contributed by His232. The Proton donor/acceptor role is filled by Glu329. Residues Asn385 and Asn428 are each glycosylated (N-linked (GlcNAc...) asparagine).

This sequence belongs to the peptidase M14 family. The cofactor is Zn(2+). As to expression, expression is restricted to the nervous system.

It localises to the cell projection. The protein resides in the axon. It is found in the perikaryon. The protein localises to the cytoplasmic vesicle. Its subcellular location is the secretory vesicle lumen. The enzyme catalyses Release of C-terminal arginine or lysine residues from polypeptides.. Its function is as follows. During FMRFamide-like peptide (FaRPs or FLP) and neuropeptide-like protein (NLP) precursor processing, catalyzes the removal of Arg or Lys residues from the C-terminus following the initial endoprotease cleavage. By processing neuropeptides, modulates basal acetylcholine release at the ventral cord neuromuscular junctions. Involved in egg-laying, defecation and locomotion. By processing FLP neuropeptides, regulates the turning step of male mating behavior. Involved in reducing pharyngeal pumping in response to high CO(2) levels. The chain is Carboxypeptidase E from Caenorhabditis elegans.